The sequence spans 935 residues: 2-oxoglutarate dehydrogenase E1 component (935 aa).

It belongs to the alpha-ketoglutarate dehydrogenase family. Homodimer. Part of the 2-oxoglutarate dehydrogenase (OGDH) complex composed of E1 (2-oxoglutarate dehydrogenase), E2 (dihydrolipoamide succinyltransferase) and E3 (dihydrolipoamide dehydrogenase); the complex contains multiple copies of the three enzymatic components (E1, E2 and E3). It depends on thiamine diphosphate as a cofactor.

The catalysed reaction is N(6)-[(R)-lipoyl]-L-lysyl-[protein] + 2-oxoglutarate + H(+) = N(6)-[(R)-S(8)-succinyldihydrolipoyl]-L-lysyl-[protein] + CO2. In terms of biological role, E1 component of the 2-oxoglutarate dehydrogenase (OGDH) complex which catalyzes the decarboxylation of 2-oxoglutarate, the first step in the conversion of 2-oxoglutarate to succinyl-CoA and CO(2). The polypeptide is 2-oxoglutarate dehydrogenase E1 component (sucA) (Haemophilus influenzae (strain ATCC 51907 / DSM 11121 / KW20 / Rd)).